A 337-amino-acid polypeptide reads, in one-letter code: Mannitol dehydrogenase (337 aa).

Positions 27, 49, 80, 83, 86, 94, and 143 each coordinate Zn(2+).

This sequence belongs to the zinc-containing alcohol dehydrogenase family. The cofactor is Zn(2+).

It catalyses the reaction D-mannitol + NAD(+) = D-mannose + NADH + H(+). Functionally, oxidizes mannitol to mannose. Provides the initial step by which translocated mannitol is committed to central metabolism and, by regulating mannitol pool size, is important in regulating salt tolerance at the cellular level. The chain is Mannitol dehydrogenase (ELI3) from Petroselinum crispum (Parsley).